The sequence spans 80 residues: MPEQREKRKKEESDVVRAEGVVEEALPNTTFRVKLDSGHDILAYISGKMRIHYIRILPGDRVVLEISPYDTSRGRIVYRK.

Residues 6-80 (EKRKKEESDV…TSRGRIVYRK (75 aa)) enclose the S1-like domain.

This sequence belongs to the IF-1 family. Component of the 30S ribosomal translation pre-initiation complex which assembles on the 30S ribosome in the order IF-2 and IF-3, IF-1 and N-formylmethionyl-tRNA(fMet); mRNA recruitment can occur at any time during PIC assembly.

It localises to the cytoplasm. One of the essential components for the initiation of protein synthesis. Stabilizes the binding of IF-2 and IF-3 on the 30S subunit to which N-formylmethionyl-tRNA(fMet) subsequently binds. Helps modulate mRNA selection, yielding the 30S pre-initiation complex (PIC). Upon addition of the 50S ribosomal subunit IF-1, IF-2 and IF-3 are released leaving the mature 70S translation initiation complex. This Deinococcus geothermalis (strain DSM 11300 / CIP 105573 / AG-3a) protein is Translation initiation factor IF-1.